We begin with the raw amino-acid sequence, 130 residues long: DNA-directed RNA polymerase subunit omega (130 aa).

Positions 107–130 (SLDVSQESHDDEIDDQDSGEEVPI) are disordered. Residues 115 to 130 (HDDEIDDQDSGEEVPI) are compositionally biased toward acidic residues.

It belongs to the RNA polymerase subunit omega family. The RNAP catalytic core consists of 2 alpha, 1 beta, 1 beta' and 1 omega subunit. When a sigma factor is associated with the core the holoenzyme is formed, which can initiate transcription.

The enzyme catalyses RNA(n) + a ribonucleoside 5'-triphosphate = RNA(n+1) + diphosphate. In terms of biological role, promotes RNA polymerase assembly. Latches the N- and C-terminal regions of the beta' subunit thereby facilitating its interaction with the beta and alpha subunits. The sequence is that of DNA-directed RNA polymerase subunit omega from Wolbachia pipientis subsp. Culex pipiens (strain wPip).